Here is a 169-residue protein sequence, read N- to C-terminus: MGTRSKSRTRQLKQSNGCTATTSGASDRRRRARRRTAPAWLREDEWLRHHLPHPPRQLSRCLHRRRRSACHHRYSRRTPKGGLPMTSSLVPISEARAHLSRLVRESADDDVVLMNHGRPAAILISAERYESLMEELEDLRDRLSVHEREHVTMPLDKLGAELGVDIGRV.

Basic residues predominate over residues 1–11; it reads MGTRSKSRTRQ. Residues 1–35 form a disordered region; sequence MGTRSKSRTRQLKQSNGCTATTSGASDRRRRARRR. Residues 120 to 153 are a coiled coil; the sequence is AAILISAERYESLMEELEDLRDRLSVHEREHVTM.

The protein belongs to the phD/YefM antitoxin family.

In terms of biological role, putative antitoxin component of a type II toxin-antitoxin (TA) system; however the expected toxin coding sequence is not found adjacent to this gene. The polypeptide is Putative antitoxin Rv0268c (Mycobacterium tuberculosis (strain ATCC 25618 / H37Rv)).